We begin with the raw amino-acid sequence, 240 residues long: ATP-dependent dethiobiotin synthetase BioD (240 aa).

15–20 (EIGKTF) contacts ATP. Mg(2+) is bound at residue Thr19. Lys40 is a catalytic residue. Residues Asp57, 118-121 (EGVG), and 178-179 (NR) contribute to the ATP site. The Mg(2+) site is built by Asp57 and Glu118.

Belongs to the dethiobiotin synthetase family. As to quaternary structure, homodimer. The cofactor is Mg(2+).

The protein localises to the cytoplasm. It carries out the reaction (7R,8S)-7,8-diammoniononanoate + CO2 + ATP = (4R,5S)-dethiobiotin + ADP + phosphate + 3 H(+). It functions in the pathway cofactor biosynthesis; biotin biosynthesis; biotin from 7,8-diaminononanoate: step 1/2. Its function is as follows. Catalyzes a mechanistically unusual reaction, the ATP-dependent insertion of CO2 between the N7 and N8 nitrogen atoms of 7,8-diaminopelargonic acid (DAPA, also called 7,8-diammoniononanoate) to form a ureido ring. In Burkholderia pseudomallei (strain K96243), this protein is ATP-dependent dethiobiotin synthetase BioD.